We begin with the raw amino-acid sequence, 84 residues long: Three-finger toxin MALT0070C (84 aa).

The signal sequence occupies residues 1–21; it reads MKTLLLTLVVVTIVCLDLGYT. 4 disulfides stabilise this stretch: Cys-24–Cys-43, Cys-36–Cys-60, Cys-64–Cys-71, and Cys-72–Cys-77.

This sequence belongs to the three-finger toxin family. Short-chain subfamily. As to expression, expressed by the venom gland.

It localises to the secreted. This Micrurus altirostris (Uruguayan coral snake) protein is Three-finger toxin MALT0070C.